A 173-amino-acid polypeptide reads, in one-letter code: Soluble secreted antigen MPT53 (173 aa).

A signal peptide spans 1-38 (MSLRLVSPIKAFADGIVAVAIAVVLMFGLANTPRAVAA). A disulfide bridge links Cys-73 with Cys-76.

It belongs to the thioredoxin family.

It localises to the secreted. In terms of biological role, disulfide oxidoreductase that catalyzes the oxidation of reduced, unfolded secreted proteins to form disulfide bonds. Despite a weak homology to thioredoxin this cannot serve as a substrate for thioredoxin reductase. The sequence is that of Soluble secreted antigen MPT53 (mpt53) from Mycobacterium bovis (strain ATCC BAA-935 / AF2122/97).